A 266-amino-acid polypeptide reads, in one-letter code: MEKGSLKSKNEKEQLSKAKASVSSLNKVIQTKLTVGNLGLGLVVIQNGPYLQISHLINKGAAASDGILQPGDVLISVGHANVLGYTLREFLKLLQNITIGTVLQIKAYRGFLEIPQEWQDVYDLIPETKFPIPHTPKKTEPARESLVKDDHEEAVLDKKLKYYRYPRSVWNHPVRTPISISTEWHGYEKKERTISVGRDINSDVVIHKDDKKELRAPSPYWAMVEQDRAISSSSSSTANSSSSDAFWLEDYAQVEEGNGKQVSKFG.

The PDZ domain occupies 27–109 (KVIQTKLTVG…GTVLQIKAYR (83 aa)).

The chain is PDZ domain-containing protein 9 (Pdzd9) from Mus musculus (Mouse).